The chain runs to 333 residues: NADH-quinone oxidoreductase subunit H (333 aa).

A run of 8 helical transmembrane segments spans residues Val17–Ile37, Val91–Val111, Ile116–Gly136, Ile156–Phe176, Met188–Val208, Tyr244–Ala264, Phe272–Leu292, and Trp310–Met330.

The protein belongs to the complex I subunit 1 family. NDH-1 is composed of 14 different subunits. Subunits NuoA, H, J, K, L, M, N constitute the membrane sector of the complex.

The protein resides in the cell inner membrane. The enzyme catalyses a quinone + NADH + 5 H(+)(in) = a quinol + NAD(+) + 4 H(+)(out). Functionally, NDH-1 shuttles electrons from NADH, via FMN and iron-sulfur (Fe-S) centers, to quinones in the respiratory chain. The immediate electron acceptor for the enzyme in this species is believed to be ubiquinone. Couples the redox reaction to proton translocation (for every two electrons transferred, four hydrogen ions are translocated across the cytoplasmic membrane), and thus conserves the redox energy in a proton gradient. This subunit may bind ubiquinone. This Acinetobacter baylyi (strain ATCC 33305 / BD413 / ADP1) protein is NADH-quinone oxidoreductase subunit H.